A 105-amino-acid polypeptide reads, in one-letter code: Secreted effector protein PINE1 (105 aa).

Residues 1–21 (MKLSQPLSIFAILAASTVAVA) form the signal peptide.

As to quaternary structure, interacts with Arabidopsis thaliana PGIP1.

The protein resides in the secreted. Effector protein required for full virulence. Directly interacts with and functionally inactivates PG-inhibiting proteins (PGIPs). PGIPs are a defense mechanism of infected plants, that inhibit the plant pathogens secreted polygalacturonases (PGs) used to degrade the plant cell wall. Excerts its function by interacting with host PGIPs to negate their polygalacturonase-inhibiting function via enhanced dissociation of PGIPs from PGs. In Sclerotinia sclerotiorum (strain ATCC 18683 / 1980 / Ss-1) (White mold), this protein is Secreted effector protein PINE1.